A 453-amino-acid chain; its full sequence is Divalent metal cation transporter MntH (453 aa).

11 helical membrane-spanning segments follow: residues 39–59, 66–86, 114–134, 146–166, 175–195, 217–237, 270–290, 310–330, 362–382, 388–408, and 427–447; these read LAFL…GNWI, AQYG…AMLL, AIMF…AEVI, IPLI…LFIM, AIVG…VYIS, GILY…NLYL, LSIA…LFFG, PALG…ALLA, LITR…FKGN, QLLV…LIPL, and INII…YLII.

Belongs to the NRAMP family.

It is found in the cell membrane. H(+)-stimulated, divalent metal cation uptake system. The chain is Divalent metal cation transporter MntH from Staphylococcus epidermidis (strain ATCC 12228 / FDA PCI 1200).